Reading from the N-terminus, the 419-residue chain is Tyrosine--tRNA ligase 2 (419 aa).

Tyr34 contacts L-tyrosine. The 'HIGH' region signature appears at 39–48; sequence PTGDSMHIGH. Tyr168 and Gln172 together coordinate L-tyrosine. Residues 230–234 carry the 'KMSKS' region motif; that stretch reads KFGKS. Lys233 contributes to the ATP binding site. In terms of domain architecture, S4 RNA-binding spans 352 to 418; sequence KNIVEWLVDL…GKKNYSLVKL (67 aa).

This sequence belongs to the class-I aminoacyl-tRNA synthetase family. TyrS type 1 subfamily. As to quaternary structure, homodimer.

The protein localises to the cytoplasm. It catalyses the reaction tRNA(Tyr) + L-tyrosine + ATP = L-tyrosyl-tRNA(Tyr) + AMP + diphosphate + H(+). Its function is as follows. Catalyzes the attachment of tyrosine to tRNA(Tyr) in a two-step reaction: tyrosine is first activated by ATP to form Tyr-AMP and then transferred to the acceptor end of tRNA(Tyr). The polypeptide is Tyrosine--tRNA ligase 2 (Bacillus anthracis).